Reading from the N-terminus, the 118-residue chain is Ribosome-binding factor A (118 aa).

The protein belongs to the RbfA family. In terms of assembly, monomer. Binds 30S ribosomal subunits, but not 50S ribosomal subunits or 70S ribosomes.

It localises to the cytoplasm. In terms of biological role, one of several proteins that assist in the late maturation steps of the functional core of the 30S ribosomal subunit. Associates with free 30S ribosomal subunits (but not with 30S subunits that are part of 70S ribosomes or polysomes). Required for efficient processing of 16S rRNA. May interact with the 5'-terminal helix region of 16S rRNA. The protein is Ribosome-binding factor A of Streptococcus pyogenes serotype M1.